A 150-amino-acid polypeptide reads, in one-letter code: 3-dehydroquinate dehydratase (150 aa).

Tyr26 acts as the Proton acceptor in catalysis. Asn77, His83, and Asp90 together coordinate substrate. His103 acts as the Proton donor in catalysis. Residues 104–105 (LS) and Arg114 contribute to the substrate site.

This sequence belongs to the type-II 3-dehydroquinase family. In terms of assembly, homododecamer.

The enzyme catalyses 3-dehydroquinate = 3-dehydroshikimate + H2O. Its pathway is metabolic intermediate biosynthesis; chorismate biosynthesis; chorismate from D-erythrose 4-phosphate and phosphoenolpyruvate: step 3/7. Its function is as follows. Catalyzes a trans-dehydration via an enolate intermediate. This chain is 3-dehydroquinate dehydratase, found in Yersinia pseudotuberculosis serotype O:1b (strain IP 31758).